We begin with the raw amino-acid sequence, 518 residues long: Membrane-bound glycerophospholipid O-acyltransferase 2 (518 aa).

Helical transmembrane passes span 21 to 41 (PVDQ…AIWF), 60 to 80 (TLLG…HFVI), 87 to 107 (YLMI…FALG), 183 to 203 (FMGI…FIEG), 230 to 250 (IAVA…MTIT), and 267 to 283 (ASWP…LMAA). Catalysis depends on residues Asn-341 and His-372. 3 helical membrane passes run 365–385 (FILS…FLTG), 415–435 (IITW…FVLL), and 443–463 (FYSS…LVFP).

This sequence belongs to the membrane-bound acyltransferase family.

The protein resides in the endoplasmic reticulum membrane. It carries out the reaction a 1-acyl-sn-glycero-3-phosphocholine + an acyl-CoA = a 1,2-diacyl-sn-glycero-3-phosphocholine + CoA. The enzyme catalyses a 1-acyl-sn-glycero-3-phosphoethanolamine + an acyl-CoA = a 1,2-diacyl-sn-glycero-3-phosphoethanolamine + CoA. It catalyses the reaction a 1-acyl-sn-glycero-3-phosphate + an acyl-CoA = a 1,2-diacyl-sn-glycero-3-phosphate + CoA. The catalysed reaction is (9Z)-hexadecenoyl-CoA + 1-hexadecanoyl-sn-glycero-3-phosphocholine = 1-hexadecanoyl-2-(9Z-hexadecenoyl)-sn-glycero-3-phosphocholine + CoA. It carries out the reaction 1-hexadecanoyl-sn-glycero-3-phosphoethanolamine + (9Z)-octadecenoyl-CoA = 1-hexadecanoyl-2-(9Z-octadecenoyl)-sn-glycero-3-phosphoethanolamine + CoA. The enzyme catalyses 1-hexadecanoyl-sn-glycero-3-phosphoethanolamine + (9Z)-hexadecenoyl-CoA = 1-hexadecanoyl-2-(9Z)-hexadecenoyl-sn-glycero-3-phosphoethanolamine + CoA. It catalyses the reaction 1-(9Z-octadecenoyl)-sn-glycero-3-phospho-L-serine + hexadecanoyl-CoA = 1-(9Z)-octadecenoyl-2-hexadecanoyl-sn-glycero-3-phosphoserine + CoA. The catalysed reaction is (9Z,12Z)-octadecadienoyl-CoA + 1-hexadecanoyl-sn-glycero-3-phosphocholine = 1-hexadecanoyl-2-(9Z,12Z-octadecadienoyl)-sn-glycero-3-phosphocholine + CoA. It carries out the reaction 1-hexadecanoyl-sn-glycero-3-phosphocholine + (9Z)-octadecenoyl-CoA = 1-hexadecanoyl-2-(9Z-octadecenoyl)-sn-glycero-3-phosphocholine + CoA. The enzyme catalyses 1-hexadecanoyl-sn-glycero-3-phosphate + (9Z)-hexadecenoyl-CoA = 1-hexadecanoyl-2-[(9Z)-hexadec-9-enoyl]-sn-glycero-3-phosphate + CoA. It catalyses the reaction 1-hexadecanoyl-sn-glycero-3-phosphate + (9Z)-octadecenoyl-CoA = 1-hexadecanoyl-2-(9Z-octadecenoyl)-sn-glycero-3-phosphate + CoA. The catalysed reaction is a 1-O-(1Z-alkenyl)-sn-glycero-3-phosphocholine + (9Z)-octadecenoyl-CoA = 1-O-(1Z)-alkenyl-2-(9Z)-octadecenoyl-sn-glycero-3-phosphocholine + CoA. It carries out the reaction a 1-O-(1Z-alkenyl)-sn-glycero-3-phosphoethanolamine + (9Z)-octadecenoyl-CoA = 1-O-(1Z)-alkenyl-2-(9Z)-octadecenoyl-sn-glycero-3-phosphoethanolamine + CoA. The enzyme catalyses 1-octadecanoyl-sn-glycero-3-phosphoethanolamine + (9Z)-octadecenoyl-CoA = 1-octadecanoyl-2-(9Z-octadecenoyl)-sn-glycero-3-phosphoethanolamine + CoA. It catalyses the reaction 1-octadecanoyl-sn-glycero-3-phosphocholine + (9Z)-octadecenoyl-CoA = 1-octadecanoyl-2-(9Z-octadecenoyl)-sn-glycero-3-phosphocholine + CoA. The catalysed reaction is 1-(9Z-octadecenoyl)-sn-glycero-3-phosphoethanolamine + (9Z)-octadecenoyl-CoA = 1,2-di-(9Z-octadecenoyl)-sn-glycero-3-phosphoethanolamine + CoA. The protein operates within lipid metabolism; phospholipid metabolism. Acyltransferase which catalyzes the transfer of an acyl group from an acyl-CoA to a lysophospholipid leading to the production of a phospholipid and participates in the reacylation step of the phospholipid remodeling pathway also known as the Lands cycle. May catalyze preferentially the acylation of lysophosphatidylethanolamine (1-acyl-sn-glycero-3-phosphoethanolamine or LPE) and lysophosphatidic acid (LPA) and to a lesser extend lysophosphatidylcholine (LPC) and lysophosphatidylserine (LPS). Prefers oleoyl-CoA as the acyl donor. The sequence is that of Membrane-bound glycerophospholipid O-acyltransferase 2 from Gallus gallus (Chicken).